The sequence spans 78 residues: uncharacterized protein (78 aa).

A run of 2 helical transmembrane segments spans residues 13 to 35 and 50 to 72; these read AGVGCVLMLMIIALVVFMLPTGI and GTTFGILMLAALPPLTGAIFYYF.

The protein resides in the cell membrane. This is an uncharacterized protein from Pasteurella multocida (strain Pm70).